Reading from the N-terminus, the 114-residue chain is Nucleoid-associated protein MAE_23910 (114 aa).

The protein belongs to the YbaB/EbfC family. Homodimer.

The protein resides in the cytoplasm. It localises to the nucleoid. Its function is as follows. Binds to DNA and alters its conformation. May be involved in regulation of gene expression, nucleoid organization and DNA protection. This chain is Nucleoid-associated protein MAE_23910, found in Microcystis aeruginosa (strain NIES-843 / IAM M-2473).